The following is a 491-amino-acid chain: G2/mitotic-specific cyclin-2 (491 aa).

S2 carries the post-translational modification N-acetylserine. Disordered stretches follow at residues 59-107 (EGSR…DPSS) and 164-184 (HPAR…SGKK). Residues 67–77 (TRESVSRSTAA) are compositionally biased toward polar residues.

This sequence belongs to the cyclin family. Cyclin AB subfamily. In terms of assembly, interacts with NAP1.

Essential for the control of the cell cycle at the G2/M (mitosis) transition. Interacts with the CDC2 protein kinase to form MPF. G2/M cyclins accumulate steadily during G2 and are abruptly destroyed at mitosis. This Saccharomyces cerevisiae (strain ATCC 204508 / S288c) (Baker's yeast) protein is G2/mitotic-specific cyclin-2 (CLB2).